The sequence spans 209 residues: Protein-L-isoaspartate O-methyltransferase (209 aa).

Serine 60 is an active-site residue.

Belongs to the methyltransferase superfamily. L-isoaspartyl/D-aspartyl protein methyltransferase family.

It localises to the cytoplasm. The catalysed reaction is [protein]-L-isoaspartate + S-adenosyl-L-methionine = [protein]-L-isoaspartate alpha-methyl ester + S-adenosyl-L-homocysteine. Functionally, catalyzes the methyl esterification of L-isoaspartyl residues in peptides and proteins that result from spontaneous decomposition of normal L-aspartyl and L-asparaginyl residues. It plays a role in the repair and/or degradation of damaged proteins. The protein is Protein-L-isoaspartate O-methyltransferase of Methanococcus vannielii (strain ATCC 35089 / DSM 1224 / JCM 13029 / OCM 148 / SB).